Reading from the N-terminus, the 320-residue chain is tRNA pseudouridine synthase B (320 aa).

Catalysis depends on Asp-41, which acts as the Nucleophile. 2 disordered regions span residues Pro-116–Gly-136 and Asp-259–Ala-284. Basic and acidic residues predominate over residues Gln-125–Gly-136. The span at Ser-270–Ala-284 shows a compositional bias: polar residues.

Belongs to the pseudouridine synthase TruB family. Type 1 subfamily.

It carries out the reaction uridine(55) in tRNA = pseudouridine(55) in tRNA. Functionally, responsible for synthesis of pseudouridine from uracil-55 in the psi GC loop of transfer RNAs. This is tRNA pseudouridine synthase B from Prochlorococcus marinus (strain MIT 9313).